The primary structure comprises 488 residues: Arginine biosynthesis bifunctional protein ArgJ, mitochondrial (488 aa).

The substrate site is built by Thr227, Lys250, Thr261, Glu340, Asn483, and Ser488. The Nucleophile role is filled by Thr261.

The protein belongs to the ArgJ family. In terms of assembly, heterodimer of an alpha and a beta chain. In terms of processing, the alpha and beta chains are autoproteolytically processed from a single precursor protein within the mitochondrion.

Its subcellular location is the mitochondrion matrix. It carries out the reaction N(2)-acetyl-L-ornithine + L-glutamate = N-acetyl-L-glutamate + L-ornithine. The enzyme catalyses L-glutamate + acetyl-CoA = N-acetyl-L-glutamate + CoA + H(+). It functions in the pathway amino-acid biosynthesis; L-arginine biosynthesis; L-ornithine and N-acetyl-L-glutamate from L-glutamate and N(2)-acetyl-L-ornithine (cyclic): step 1/1. Its pathway is amino-acid biosynthesis; L-arginine biosynthesis; N(2)-acetyl-L-ornithine from L-glutamate: step 1/4. In terms of biological role, catalyzes two activities which are involved in the cyclic version of arginine biosynthesis: the synthesis of acetylglutamate from glutamate and acetyl-CoA, and of ornithine by transacetylation between acetylornithine and glutamate. The sequence is that of Arginine biosynthesis bifunctional protein ArgJ, mitochondrial from Thalassiosira pseudonana (Marine diatom).